The sequence spans 141 residues: Nucleoside diphosphate kinase (141 aa).

The ATP site is built by K11, F59, R87, T93, R104, and N114. The active-site Pros-phosphohistidine intermediate is H117.

This sequence belongs to the NDK family. Homotetramer. The cofactor is Mg(2+).

It is found in the cytoplasm. It catalyses the reaction a 2'-deoxyribonucleoside 5'-diphosphate + ATP = a 2'-deoxyribonucleoside 5'-triphosphate + ADP. The catalysed reaction is a ribonucleoside 5'-diphosphate + ATP = a ribonucleoside 5'-triphosphate + ADP. In terms of biological role, major role in the synthesis of nucleoside triphosphates other than ATP. The ATP gamma phosphate is transferred to the NDP beta phosphate via a ping-pong mechanism, using a phosphorylated active-site intermediate. This is Nucleoside diphosphate kinase from Bordetella bronchiseptica (strain ATCC BAA-588 / NCTC 13252 / RB50) (Alcaligenes bronchisepticus).